The sequence spans 509 residues: MEEIHRYLQPDSSQQHNFLYPLIFQEYIYALAQDHGLNRNRSILLENSGYNNKFSFLIVKRLITRMYQQNHFIISTNDSNKNPFLGCNKSLYSQMISEGFACIVEIPFSIRLISSLSSFEGKKIFKSHNLRSIHSTFPFLEDNFSHLNYVLDILIPYPVHLEILVQTLRYWVKDASSLHLLRFFLHEYCNLNSLITSKKPGYSFSKKNQRFFFFLYNSYVYECESTFVFLRNQSSHLRSTSFGALLERIYFYGKIERLVEVFAKDFQVTLWLFKDPFMHYVRYEGKSILASKGTFPLMNKWKFYLVNFWQCHFSMYFHTGRIHINQLSNHSRDFMGYLSSVRLNHSMVRSQMLENSFLINNPIKKFETLVPIIPLIGSLAKAHFCTVLGHPISKPVWSDLSDSDIIDRFGRICRNLFHYYSGSSKKKTLYRIKYILRLSCARTLARKHKSTVRTFLKRSGSELLEEFLTSEEQVLSLTFPRASSSLWGVYRSRIWYLDIFCINDLANYQ.

Belongs to the intron maturase 2 family. MatK subfamily.

It is found in the plastid. The protein localises to the chloroplast. Usually encoded in the trnK tRNA gene intron. Probably assists in splicing its own and other chloroplast group II introns. The chain is Maturase K from Solanum bulbocastanum (Wild potato).